The sequence spans 439 residues: CBL-interacting serine/threonine-protein kinase 20 (439 aa).

A Protein kinase domain is found at 12 to 266; sequence YELGRLLGQG…IEKIMENSWF (255 aa). ATP-binding positions include 18 to 26 and Lys-41; that span reads LGQGTFAKV. Asp-134 acts as the Proton acceptor in catalysis. The interval 152–181 is activation loop; it reads DFGLSALRESKQQDGLLHTTCGTPAYVAPE. Position 156 is a phosphoserine (Ser-156). Thr-170 carries the post-translational modification Phosphothreonine. Residues 297–322 enclose the NAF domain; it reads VKPMSYNAFDLISSLSQGFDLSGLFE. A PPI region spans residues 326-356; sequence RSESKFTTKKDAKEIVSKFEEIATSSERFNL.

It belongs to the protein kinase superfamily. CAMK Ser/Thr protein kinase family. SNF1 subfamily. It depends on Mn(2+) as a cofactor. In terms of processing, autophosphorylated. As to expression, confined to mature leaves.

The catalysed reaction is L-seryl-[protein] + ATP = O-phospho-L-seryl-[protein] + ADP + H(+). It carries out the reaction L-threonyl-[protein] + ATP = O-phospho-L-threonyl-[protein] + ADP + H(+). Functionally, CIPK serine-threonine protein kinases interact with CBL proteins. Binding of a CBL protein to the regulatory NAF domain of CIPK protein lead to the activation of the kinase in a calcium-dependent manner. Required for the abscisic acid-mediated (ABA) signaling pathway involved in seed germination and growth elongation inhibition. In Arabidopsis thaliana (Mouse-ear cress), this protein is CBL-interacting serine/threonine-protein kinase 20 (CIPK20).